Reading from the N-terminus, the 287-residue chain is Inorganic pyrophosphatase (287 aa).

Residue R79 participates in diphosphate binding. Mg(2+)-binding residues include D116, D121, and D153.

This sequence belongs to the PPase family. The cofactor is Mg(2+).

It is found in the cytoplasm. The enzyme catalyses diphosphate + H2O = 2 phosphate + H(+). This chain is Inorganic pyrophosphatase (IPP1), found in Debaryomyces hansenii (strain ATCC 36239 / CBS 767 / BCRC 21394 / JCM 1990 / NBRC 0083 / IGC 2968) (Yeast).